The primary structure comprises 363 residues: NAD(P)H-quinone oxidoreductase subunit 1, chloroplastic (363 aa).

Transmembrane regions (helical) follow at residues 30–50, 104–124, 129–149, 248–268, 269–289, 300–320, and 336–356; these read FIPI…IVWL, IAVI…HLVL, IGVF…LMSG, YSGI…LVSS, LFVT…IFVF, VFEP…FLFI, and LLNL…LLTT.

The protein belongs to the complex I subunit 1 family. As to quaternary structure, NDH is composed of at least 16 different subunits, 5 of which are encoded in the nucleus.

Its subcellular location is the plastid. The protein localises to the chloroplast thylakoid membrane. It carries out the reaction a plastoquinone + NADH + (n+1) H(+)(in) = a plastoquinol + NAD(+) + n H(+)(out). It catalyses the reaction a plastoquinone + NADPH + (n+1) H(+)(in) = a plastoquinol + NADP(+) + n H(+)(out). NDH shuttles electrons from NAD(P)H:plastoquinone, via FMN and iron-sulfur (Fe-S) centers, to quinones in the photosynthetic chain and possibly in a chloroplast respiratory chain. The immediate electron acceptor for the enzyme in this species is believed to be plastoquinone. Couples the redox reaction to proton translocation, and thus conserves the redox energy in a proton gradient. The polypeptide is NAD(P)H-quinone oxidoreductase subunit 1, chloroplastic (Morus indica (Mulberry)).